The primary structure comprises 354 residues: Phenylalanine--tRNA ligase alpha subunit (354 aa).

A Mg(2+)-binding site is contributed by glutamate 279.

It belongs to the class-II aminoacyl-tRNA synthetase family. Phe-tRNA synthetase alpha subunit type 1 subfamily. In terms of assembly, tetramer of two alpha and two beta subunits. It depends on Mg(2+) as a cofactor.

It localises to the cytoplasm. The enzyme catalyses tRNA(Phe) + L-phenylalanine + ATP = L-phenylalanyl-tRNA(Phe) + AMP + diphosphate + H(+). This chain is Phenylalanine--tRNA ligase alpha subunit, found in Cupriavidus pinatubonensis (strain JMP 134 / LMG 1197) (Cupriavidus necator (strain JMP 134)).